The primary structure comprises 515 residues: Phospholipase A1-Igamma1, chloroplastic (515 aa).

The N-terminal 44 residues, 1 to 44 (MATIPSHNLRPHTTNQRTQYSLSFRPHFSRSTLITFPARSSPAR), are a transit peptide targeting the chloroplast. A GXSXG motif is present at residues 301–305 (GHSLG). Ser303 functions as the Acyl-ester intermediate in the catalytic mechanism. Active-site charge relay system residues include Asp366 and His422.

Belongs to the AB hydrolase superfamily. Lipase family. As to expression, ubiquitous. Highly expressed in leaves.

Its subcellular location is the plastid. It localises to the chloroplast. The enzyme catalyses 1,2-dihexadecanoyl-sn-glycero-3-phosphocholine + H2O = 2-hexadecanoyl-sn-glycero-3-phosphocholine + hexadecanoate + H(+). The catalysed reaction is a 1,2-diacyl-3-O-(beta-D-galactosyl)-sn-glycerol + H2O = an acyl-3-O-(beta-D-galactosyl)-sn-glycerol + a fatty acid + H(+). It catalyses the reaction a 1,2-diacyl-3-O-[alpha-D-galactosyl-(1-&gt;6)-beta-D-galactosyl]-sn-glycerol + H2O = acyl-3-O-[alpha-D-galactosyl-(1-&gt;6)-beta-D-galactosyl]-sn-glycerol + a fatty acid + H(+). In terms of biological role, acylhydrolase with a broad specificity. Catalyzes the hydrolysis of phosphatidylcholine at the sn-1 position. Moderate activity toward phosphatidylcholine (PC), monogalactosyldiacylglycerol (MGDG), digalactosyldiacylglycerol (DGDG) and triacylglycerol (TAG). May display dual sn-1/sn-2 substrate specificity. Could be involved in early wound response. This chain is Phospholipase A1-Igamma1, chloroplastic, found in Arabidopsis thaliana (Mouse-ear cress).